Here is a 589-residue protein sequence, read N- to C-terminus: DNA mismatch repair protein MutL (589 aa).

2 disordered regions span residues 330–355 (LQRREAPQRPEPARPYTTPPPSSHRE) and 374–394 (RIYEQPEPYRPPEPPAASEPT). Positions 331 to 341 (QRREAPQRPEP) are enriched in basic and acidic residues. The segment covering 381–390 (PYRPPEPPAA) has biased composition (pro residues).

The protein belongs to the DNA mismatch repair MutL/HexB family.

Its function is as follows. This protein is involved in the repair of mismatches in DNA. It is required for dam-dependent methyl-directed DNA mismatch repair. May act as a 'molecular matchmaker', a protein that promotes the formation of a stable complex between two or more DNA-binding proteins in an ATP-dependent manner without itself being part of a final effector complex. The polypeptide is DNA mismatch repair protein MutL (Trichlorobacter lovleyi (strain ATCC BAA-1151 / DSM 17278 / SZ) (Geobacter lovleyi)).